The chain runs to 896 residues: NEDD4-binding protein 1 (896 aa).

The 85-residue stretch at 59–143 (QEAVHSAKEY…IQQFVKLFEN (85 aa)) folds into the KH-like domain. Serine 226 carries the phosphoserine modification. Position 242 is a phosphothreonine (threonine 242). Phosphoserine occurs at positions 258 and 300. 2 disordered regions span residues 403 to 430 (YPETNKTKNKGVYSSTNELTTDSTPKKT) and 488 to 507 (ETDGLSPSVASPSPKEVNFV). Residues 414 to 430 (VYSSTNELTTDSTPKKT) are compositionally biased toward polar residues. Serine 562 is subject to Phosphoserine. An RNase NYN domain is found at 617-769 (LKHIVIDGSN…LGRSGPRLEE (153 aa)). The tract at residues 801 to 821 (GTQAASTSHQPPTRIQGAPSS) is disordered. Residues 803-813 (QAASTSHQPPT) are compositionally biased toward polar residues. The interval 849–896 (RSSAETNELREALLKIFPDSEQRLKIDQILVAHPYMKDLNALSAMVLD) is coCUN.

The protein belongs to the N4BP1 family. Interacts with NEDD4. Interacts with ITCH (via WW domain 2). In terms of processing, proteolytically cleaved by CASP8 downstream of TLR3 or TLR4, leading to its inactivation. Mainly cleaved at Asp-490 by CASP8. Cleaved by caspase-like protein MALT1 in T-cells following TCR-mediated activation, leading to its inactivation and subsequent viral reactivation during HIV-1 infection. Mono- and polyubiquitinated on the CoCUN region. Monoubiquitinated by NEDD4. Polyubiquitinated, leading to its degradation by the proteasome. Sumoylated with SUMO1, abrogating polyubiquitination and subsequent degradation. Desumoylated by SENP1, leading to accumulation in PML nuclear bodies. Detected in heart, lung, brain, liver, skeletal muscle, pancreas, kidney, spleen, testis and ovary.

Its subcellular location is the cytoplasm. The protein resides in the cytosol. It localises to the nucleus. The protein localises to the nucleolus. It is found in the PML body. Proteolytic cleavage by CASP8 or MALT1 leads to its inactivation. In terms of biological role, potent suppressor of cytokine production that acts as a regulator of innate immune signaling and inflammation. Acts as a key negative regulator of select cytokine and chemokine responses elicited by TRIF-independent Toll-like receptors (TLRs), thereby limiting inflammatory cytokine responses to minor insults. In response to more threatening pathogens, cleaved by CASP8 downstream of TLR3 or TLR4, leading to its inactivation, thereby allowing production of inflammatory cytokines. Acts as a restriction factor against some viruses, such as HIV-1: restricts HIV-1 replication by binding to HIV-1 mRNAs and mediating their degradation via its ribonuclease activity. Also acts as an inhibitor of the E3 ubiquitin-protein ligase ITCH: acts by interacting with the second WW domain of ITCH, leading to compete with ITCH's substrates and impairing ubiquitination of substrates. The sequence is that of NEDD4-binding protein 1 from Homo sapiens (Human).